We begin with the raw amino-acid sequence, 344 residues long: Meiotic recombination protein DMC1 homolog B (344 aa).

133–140 provides a ligand contact to ATP; that stretch reads GEFRSGKT. Arg235 is a binding site for dsDNA. SsDNA contacts are provided by Arg235, Phe238, Arg241, Arg247, and Arg315. Positions 241 and 247 each coordinate dsDNA.

Belongs to the RecA family. DMC1 subfamily. Highly expressed in spikelets. Expressed in meiotic young panicles.

It is found in the nucleus. Recombinase that may participate in meiotic recombination, specifically in homologous strand assimilation, which is required for the resolution of meiotic double-strand breaks. Exhibits DNA-dependent ATPase activity when bound to single-stranded DNA (ssDNA). Mediates renaturation of homologous complementary strands as well as assimilation of single strands into homologous supercoiled duplexes leading to D-loop formation. Binds circular single-stranded DNA (ssDNA) and circular double-stranded DNA (dsDNA) in vitro. Catalyzes DNA homologous renaturation and DNA strand exchange. The rates of these activities are dependent on the state of ATP hydrolysis. Forms helical filaments along ssDNA and dsDNA, and promotes strand exchange between ssDNA and dsDNA with long DNA substrates of several thousand base pairs. The presence of the replication protein A is not required for this activity. Seems to be required for homologous pairing and subsequent chromosome segregation during male meiosis. May be not directly required for homologous pairing during male meiosis. Required for synaptonemal complex assembly and crossover formation. Functions redundantly with DMC1A. This chain is Meiotic recombination protein DMC1 homolog B, found in Oryza sativa subsp. japonica (Rice).